We begin with the raw amino-acid sequence, 358 residues long: Ribosomal RNA large subunit methyltransferase M (358 aa).

S-adenosyl-L-methionine contacts are provided by residues S187, 220 to 223 (CPGG), D239, D259, and D276. K305 functions as the Proton acceptor in the catalytic mechanism.

The protein belongs to the class I-like SAM-binding methyltransferase superfamily. RNA methyltransferase RlmE family. RlmM subfamily. Monomer.

The protein resides in the cytoplasm. The enzyme catalyses cytidine(2498) in 23S rRNA + S-adenosyl-L-methionine = 2'-O-methylcytidine(2498) in 23S rRNA + S-adenosyl-L-homocysteine + H(+). Its function is as follows. Catalyzes the 2'-O-methylation at nucleotide C2498 in 23S rRNA. The sequence is that of Ribosomal RNA large subunit methyltransferase M from Shewanella woodyi (strain ATCC 51908 / MS32).